The sequence spans 391 residues: Coiled-coil domain-containing protein 85C-A (391 aa).

Coiled-coil stretches lie at residues 23–87 (KCSK…ELCC) and 121–146 (FQQK…KEII). Residues 154–212 (NGAGSRSSIDSQSSLSNLNGGSATVRDVGDGSSTSSTGSAGSPDHHHSHIHKPTEGKIT) form a disordered region. Low complexity-rich tracts occupy residues 158 to 175 (SRSS…NGGS) and 183 to 195 (DGSS…SAGS).

The protein belongs to the CCDC85 family.

The protein localises to the cell junction. It localises to the tight junction. Its subcellular location is the adherens junction. May play a role in cell-cell adhesion and epithelium development through its interaction with proteins of the beta-catenin family. May play an important role in cortical development, especially in the maintenance of radial glia. This chain is Coiled-coil domain-containing protein 85C-A (ccdc85ca), found in Danio rerio (Zebrafish).